Here is an 82-residue protein sequence, read N- to C-terminus: Cytochrome b559 subunit alpha (82 aa).

The helical transmembrane segment at 21–35 (VIHSVTIPSLFIAGW) threads the bilayer. H23 lines the heme pocket.

It belongs to the PsbE/PsbF family. As to quaternary structure, heterodimer of an alpha subunit and a beta subunit. PSII is composed of 1 copy each of membrane proteins PsbA, PsbB, PsbC, PsbD, PsbE, PsbF, PsbH, PsbI, PsbJ, PsbK, PsbL, PsbM, PsbT, PsbX, PsbY, PsbZ, Psb30/Ycf12, at least 3 peripheral proteins of the oxygen-evolving complex and a large number of cofactors. It forms dimeric complexes. Requires heme b as cofactor.

The protein resides in the plastid. It is found in the chloroplast thylakoid membrane. Functionally, this b-type cytochrome is tightly associated with the reaction center of photosystem II (PSII). PSII is a light-driven water:plastoquinone oxidoreductase that uses light energy to abstract electrons from H(2)O, generating O(2) and a proton gradient subsequently used for ATP formation. It consists of a core antenna complex that captures photons, and an electron transfer chain that converts photonic excitation into a charge separation. This Ostreococcus tauri protein is Cytochrome b559 subunit alpha.